A 432-amino-acid polypeptide reads, in one-letter code: Adenylosuccinate synthetase (432 aa).

GTP-binding positions include Gly12–Lys18 and Gly40–Thr42. The active-site Proton acceptor is the Asp13. The Mg(2+) site is built by Asp13 and Gly40. Residues Asp13 to Lys16, Asn38 to His41, Thr128, Arg142, Gln223, Thr238, and Arg302 each bind IMP. Catalysis depends on His41, which acts as the Proton donor. Substrate is bound at residue Thr298–Arg304. Residues Arg304, His330–Asp332, and Gly417–Gly419 contribute to the GTP site.

It belongs to the adenylosuccinate synthetase family. Homodimer. Requires Mg(2+) as cofactor.

Its subcellular location is the cytoplasm. It carries out the reaction IMP + L-aspartate + GTP = N(6)-(1,2-dicarboxyethyl)-AMP + GDP + phosphate + 2 H(+). Its pathway is purine metabolism; AMP biosynthesis via de novo pathway; AMP from IMP: step 1/2. Plays an important role in the de novo pathway of purine nucleotide biosynthesis. Catalyzes the first committed step in the biosynthesis of AMP from IMP. This Symbiobacterium thermophilum (strain DSM 24528 / JCM 14929 / IAM 14863 / T) protein is Adenylosuccinate synthetase.